The sequence spans 1828 residues: Separin (1828 aa).

The 95-residue stretch at 1647–1741 (KEAGSYILNP…SGALYECGSF (95 aa)) folds into the Peptidase C50 domain. Cys1730 is a catalytic residue.

In terms of assembly, interacts with cut2. Interacts with rad21.

The protein resides in the cytoplasm. It localises to the nucleus. It carries out the reaction All bonds known to be hydrolyzed by this endopeptidase have arginine in P1 and an acidic residue in P4. P6 is often occupied by an acidic residue or by a hydroxy-amino-acid residue, the phosphorylation of which enhances cleavage.. With respect to regulation, it is inactivated via its interaction with cut2, which probably covers its active site. Cut2 degradation at anaphase, liberates it and triggers rad21 cleavage. In terms of biological role, caspase-like protease, which plays a central role in the chromosome segregation by cleaving the rad21 subunit of the cohesin complex at the onset of anaphase. During most of the cell cycle, it is inactivated by securin/cut2 protein. It is also required for pointed nuclear formation. This is Separin (cut1) from Schizosaccharomyces pombe (strain 972 / ATCC 24843) (Fission yeast).